Reading from the N-terminus, the 57-residue chain is Somatostatin-2 (57 aa).

The disordered stretch occupies residues 1-26 (GRSHMVLNSALEGARGGPGGEEIPER).

It belongs to the somatostatin family.

The protein resides in the secreted. Somatostatin inhibits the release of somatotropin. The polypeptide is Somatostatin-2 (sst2) (Piaractus mesopotamicus (Small-scaled pacu)).